The primary structure comprises 487 residues: Cytochrome P450 720B2 (487 aa).

Residues 14 to 34 form a helical membrane-spanning segment; sequence WLVGLLCLVLGFLLLQLYKLV. Cys-436 is a heme binding site.

Belongs to the cytochrome P450 family. It depends on heme as a cofactor.

The protein localises to the membrane. The protein is Cytochrome P450 720B2 (CYP720B2) of Pinus taeda (Loblolly pine).